The chain runs to 648 residues: EF-hand domain-containing protein 1 (648 aa).

Positions 1–45 (MGTNPVHGLPFLPGSSFTDSTKTAFHRSQTLNYRNGYAVVRRPTM) are required for its localization in the mitotic spindle and interaction with alpha-tubulin. DM10 domains follow at residues 93 to 198 (DKKV…ESQG), 239 to 359 (DKQV…KDKF), and 416 to 520 (DNKV…ESNA). One can recognise an EF-hand domain in the interval 582 to 617 (SYKENLRETFQMYDKDESGYVDRETFFKICETLNVP).

In terms of assembly, microtubule inner protein component of sperm flagellar doublet microtubules. Interacts with the C-terminus of CACNA1E. Interacts with alpha-tubulin. Expressed in adult brain including hippocampus, cerebellum, cerebral cortex, thalamus, hypothalamus, amygdala and upper brainstem. Expressed in soma and dentrites of pyramidal neurons of the hippocampal CA1 region, pyramidal neurons of the cerebral cortex and Purkinje cells of cerebellum. Highly expressed in testis, trachea, and oviduct, moderately in lung, and slightly in brain. Highly expressed in sperm flagella and tracheal cilia (at protein level).

The protein localises to the cytoplasm. It is found in the cytoskeleton. Its subcellular location is the cilium axoneme. It localises to the flagellum axoneme. The protein resides in the microtubule organizing center. The protein localises to the centrosome. It is found in the spindle. Its subcellular location is the spindle pole. Functionally, microtubule inner protein (MIP) part of the dynein-decorated doublet microtubules (DMTs) in cilia axoneme, which is required for motile cilia beating. Microtubule-associated protein which regulates cell division and neuronal migration during cortical development. Necessary for radial and tangential cell migration during brain development, possibly acting as a regulator of cell morphology and process formation during migration. May enhance calcium influx through CACNA1E and stimulate programmed cell death. Overexpression of EFHC1 in hippocampal primary culture neurons induced apoptosis. The polypeptide is EF-hand domain-containing protein 1 (Efhc1) (Mus musculus (Mouse)).